The primary structure comprises 163 residues: Ribonuclease P protein component 4 (163 aa).

4 residues coordinate Zn(2+): Cys66, Cys69, Cys96, and Cys99. The interval 110-163 (GPRGGAPISPPAAEYGSGGRDSGEREDKGPQGPPRQGGRDNRQGGGHQGGPKGD) is disordered. Gly residues predominate over residues 152 to 163 (QGGGHQGGPKGD).

It belongs to the eukaryotic/archaeal RNase P protein component 4 family. In terms of assembly, consists of a catalytic RNA component and at least 4-5 protein subunits. Zn(2+) serves as cofactor.

It is found in the cytoplasm. The enzyme catalyses Endonucleolytic cleavage of RNA, removing 5'-extranucleotides from tRNA precursor.. Functionally, part of ribonuclease P, a protein complex that generates mature tRNA molecules by cleaving their 5'-ends. In Aeropyrum pernix (strain ATCC 700893 / DSM 11879 / JCM 9820 / NBRC 100138 / K1), this protein is Ribonuclease P protein component 4.